Here is a 682-residue protein sequence, read N- to C-terminus: MSRKQLALFEPTLVVQALKEAVKKLNPQAQWRNPVMFIVWIGSLLTTCISIAMASGAMPGNALFSAAISGWLWVTVLFANFAEALAEGRSKAQANSLKGVKKTAFARKLREPKYGAAADKVPADQLRKGDIVLVEAGDIIPCDGEVIEGGASVDESAITGESAPVIRESGGDFASVTGGTRILSDWLVIECSVNPGETFLDRMIAMVEGAQRRKTPNEIALTILLIALTIVFLLATATLWPFSAWGGNAVSVTVLVALLVCLIPTTIGGLLSAIGVAGMSRMLGANVIATSGRAVEAAGDVDVLLLDKTGTITLGNRQASEFIPAQGVDEKTLADAAQLASLADETPEGRSIVILAKQRFNLRERDVQSLHATFVPFTAQSRMSGINIDNRMIRKGSVDAIRRHIEANGGHFPADVDQKVDQVARQGATPLVVVEGSRVLGVIALKDIVKGGIKERFAQLRKMGIKTVMITGDNRLTAAAIAAEAGVDDFLAEATPEAKLALIRQYQAEGRLVAMTGDGTNDAPALAQADVAVAMNSGTQAAKEAGNMVDLDSNPTKLIEVVHIGKQMLMTRGSLTTFSIANDVAKYFAIIPAAFAATYPQLNALNIMRLHSPDSAILSAVIFNALIIVFLIPLALKGVSYKPLTASAMLRRNLWIYGLGGLLVPFIGIKVIDLLLTVCGLV.

4 helical membrane-spanning segments follow: residues 34-54 (PVMF…IAMA), 62-82 (ALFS…ANFA), 219-239 (IALT…TATL), and 254-274 (VLVA…LSAI). The active-site 4-aspartylphosphate intermediate is Asp-307. ATP contacts are provided by residues Asp-344, Glu-348, 377–384 (FTAQSRMS), and Lys-395. Positions 518 and 522 each coordinate Mg(2+). A run of 3 helical transmembrane segments spans residues 588-608 (FAII…LNIM), 616-636 (AILS…PLAL), and 656-676 (IYGL…DLLL).

It belongs to the cation transport ATPase (P-type) (TC 3.A.3) family. Type IA subfamily. As to quaternary structure, the system is composed of three essential subunits: KdpA, KdpB and KdpC.

It is found in the cell inner membrane. The enzyme catalyses K(+)(out) + ATP + H2O = K(+)(in) + ADP + phosphate + H(+). Part of the high-affinity ATP-driven potassium transport (or Kdp) system, which catalyzes the hydrolysis of ATP coupled with the electrogenic transport of potassium into the cytoplasm. This subunit is responsible for energy coupling to the transport system and for the release of the potassium ions to the cytoplasm. The protein is Potassium-transporting ATPase ATP-binding subunit of Shigella sonnei (strain Ss046).